We begin with the raw amino-acid sequence, 170 residues long: Shikimate kinase (170 aa).

Position 15–20 (15–20 (GAGKTT)) interacts with ATP. Threonine 19 is a binding site for Mg(2+). The substrate site is built by aspartate 37, arginine 61, and glycine 83. Arginine 121 contacts ATP. Arginine 140 lines the substrate pocket.

Belongs to the shikimate kinase family. Monomer. The cofactor is Mg(2+).

The protein resides in the cytoplasm. It carries out the reaction shikimate + ATP = 3-phosphoshikimate + ADP + H(+). It participates in metabolic intermediate biosynthesis; chorismate biosynthesis; chorismate from D-erythrose 4-phosphate and phosphoenolpyruvate: step 5/7. Its function is as follows. Catalyzes the specific phosphorylation of the 3-hydroxyl group of shikimic acid using ATP as a cosubstrate. The protein is Shikimate kinase of Neisseria gonorrhoeae (strain ATCC 700825 / FA 1090).